A 419-amino-acid chain; its full sequence is L-rhamnose isomerase (419 aa).

Residues H262, D294, and D296 each contribute to the Mn(2+) site.

This sequence belongs to the rhamnose isomerase family. In terms of assembly, homotetramer. Mn(2+) is required as a cofactor.

The protein resides in the cytoplasm. The catalysed reaction is L-rhamnopyranose = L-rhamnulose. The protein operates within carbohydrate degradation; L-rhamnose degradation; glycerone phosphate from L-rhamnose: step 1/3. Its function is as follows. Catalyzes the interconversion of L-rhamnose and L-rhamnulose. This chain is L-rhamnose isomerase, found in Enterobacter sp. (strain 638).